The following is a 1342-amino-acid chain: MVYSYTERKRIRKDFGKRPQVLDIPYLLAIQINSFKKFIEKDPEGLYGLEAAFKSIFPIKSYSGNAELKYISYRLGCSVFNVKECQTRGTTFSAPLRVILQLIIYCDESKHVVKNIKEQEVYMGEIPLMTDNGTFIINGTERVVVSQLHRSPGVFFDSDKGKTHSSGKVLYNARIIPYRGSWLDFEFDAKDHLFIRIDRRRKLPVTVLLKALNFSDGEILNIFFEKVNFFIRKKNLLMELIPKRLRGETALFDICENGITYIKKGRRITAKHIRNLENDKISQITVPFEYIIGKVSAKNYFDKKTEKPIITANTELTVDLMLNLFKSGYKSIETLFTNDLDHGSYISETLRIDSTTDKTSALIEIYRMMRPGEPPTKEAAENLFYNLFFSEDRYDLSSVGRMKFNKSLSINSSEGSSLLDKFDIIEVTKKLIDIRNGKGDVDDIDHLGNRRIRSVGEMAENQFRIGLVRVERAVKERLSLGDLDTIMPQDMINAKPISAAVKEFFGSSQLSQFMDQNNPLSEITHKRRISALGPGGLTRERAGFEVRDVHPTHYGRVCPIETPEGPNIGLINSLSVYARTNEYGFLETPYRCVLNGIVTNNIHYLSAIEEGKFIIAQANTNLDKNGYFINEFVTCRNKGESSLFNRNQVNYMDVSTQQIVSVGASLIPFLEHDDANRALMGANMQRQAVPTLMTEKPLIGTGMERAVAVDSGVTAVAKRGGIVQFLDSSKIIIKVNQEEIIKEKIGIDIYHLTKYVRSNQNTCINQTPCVCLNDVVERGDVLADGPSTDLGELALGQNMRIAFMPWNGYNFEDSMLVSEKVVHEDRFTTIHIQELACMSRDTKLGSEEITSDIPNVSETSLLKLDESGIVYIGAEVKGGDILVGKVTPKGETQLTPEEKLLRAIFGEKASDVKDSSLRVPNGVSGTVIDVEIFTRDGVKKDKRALEIEYMQIKEAKKDIYEELEIFKSSLKIQIEYFLKENNIEYDSLSELLKGNIKNLIFKNNNLNNIFEELINKFLRLKEEFEKKLEIKIKKITQGDDLAPGVLKIVKVYLAVKRQIQPGDKMAGRHGNKGVISKINPIEDMPYDENGVPVDMVLNPLGVPSRMNIGQILETHLGLAAKGIGNIIDNMLKNNKKIYKIKKFIQNAYNLGIGIRQKVELDHFSDKEIIKLANNLRKGMPIATPVFDGAQEIEIKELLKFSGNPESGQITLFDGQTGEKFDRPVTVGYMYMLKLNHLVDDKMHARSTGSYSLVTQQPLGGKAQFGGQRFGEMEVWALEAYGAAYSLQEMLTVKSDDVNGRTKMYKNIVDGSHLMEPGMPESFNVLLKEIRSLGINIELEENN.

Belongs to the RNA polymerase beta chain family. As to quaternary structure, the RNAP catalytic core consists of 2 alpha, 1 beta, 1 beta' and 1 omega subunit. When a sigma factor is associated with the core the holoenzyme is formed, which can initiate transcription.

The catalysed reaction is RNA(n) + a ribonucleoside 5'-triphosphate = RNA(n+1) + diphosphate. Its function is as follows. DNA-dependent RNA polymerase catalyzes the transcription of DNA into RNA using the four ribonucleoside triphosphates as substrates. This Wigglesworthia glossinidia brevipalpis protein is DNA-directed RNA polymerase subunit beta.